Consider the following 246-residue polypeptide: Mast cell protease 4 (246 aa).

An N-terminal signal peptide occupies residues Met1 to Ala18. Positions Glu19–Glu20 are cleaved as a propeptide — activation peptide. The region spanning Ile21–Lys244 is the Peptidase S1 domain. Cys50 and Cys66 are oxidised to a cystine. Residues His65 and Asp109 each act as charge relay system in the active site. 2 disulfide bridges follow: Cys143/Cys208 and Cys174/Cys187. The active-site Charge relay system is Ser202.

This sequence belongs to the peptidase S1 family. Granzyme subfamily. As to quaternary structure, monomer. Interacts with iripin-2, a serine protease inhibitor from Ixodes ricinus saliva. In terms of tissue distribution, submucosal mast cells. In femoral muscle, detected in myocytes but not in mast cells.

Completely inhibited by serine protease inhibitors such as chymostatin, diisopropylfluorophosphate and phenylmethylsulfonyl fluoride, but not by p-tosyl-L-phenylalanine chloromethyl ketone, p-tosyl-L-lysine chloromethyl ketone, pepstatin, E-64, EDTA or o-phenanthroline. Also inhibited by lima bean trypsin inhibitor, soy bean trypsin inhibitor and human plasma alpha1-antichymotrypsin. Its function is as follows. Has chymotrypsin-like activity. Hydrolyzes the amide bonds of synthetic substrates having Tyr and Phe residues at the P1 position. Preferentially hydrolyzes the 'Tyr-4-|-Ile-5' bond of angiotensin I and the 'Phe-20-|-Ala-21' bond of amyloid beta-protein, and is less active towards the 'Phe-8-|-His-9' bond of angiotensin I and the 'Phe-4-|-Ala-5' and 'Tyr-10-|-Glu-11' bonds of amyloid beta-protein. Involved in thrombin regulation and fibronectin processing. This chain is Mast cell protease 4 (Mcpt4), found in Mus musculus (Mouse).